Consider the following 39-residue polypeptide: Neuropeptide F (39 aa).

Phenylalanine amide is present on Phe-39.

This sequence belongs to the NPY family. Neuronal somata and fibers.

Its subcellular location is the secreted. May have an important physiological role in neuroregulation. This is Neuropeptide F from Cornu aspersum (Brown garden snail).